Here is a 244-residue protein sequence, read N- to C-terminus: Type III pantothenate kinase (244 aa).

7 to 14 contacts ATP; it reads DIGNTRLK. Substrate-binding positions include tyrosine 95 and 102-105; that span reads GIDR. Residue aspartate 104 is the Proton acceptor of the active site. Threonine 126 is a binding site for ATP. Substrate is bound at residue threonine 177.

The protein belongs to the type III pantothenate kinase family. In terms of assembly, homodimer. Requires NH4(+) as cofactor. It depends on K(+) as a cofactor.

The protein localises to the cytoplasm. It catalyses the reaction (R)-pantothenate + ATP = (R)-4'-phosphopantothenate + ADP + H(+). It participates in cofactor biosynthesis; coenzyme A biosynthesis; CoA from (R)-pantothenate: step 1/5. Functionally, catalyzes the phosphorylation of pantothenate (Pan), the first step in CoA biosynthesis. The protein is Type III pantothenate kinase of Acinetobacter baumannii (strain AB307-0294).